The primary structure comprises 346 residues: D-alanine--D-alanine ligase A (346 aa).

Residues 138 to 332 (KRLFLAAGVE…FAELCERICR (195 aa)) enclose the ATP-grasp domain. Position 164 to 217 (164 to 217 (QLGFPLVVKPNSQGSTVGLSIVHSQAELQPAIELAGRYGDEVMLERFVAGREVT)) interacts with ATP. 3 residues coordinate Mg(2+): D286, E299, and N301.

It belongs to the D-alanine--D-alanine ligase family. Requires Mg(2+) as cofactor. Mn(2+) serves as cofactor.

It localises to the cytoplasm. The enzyme catalyses 2 D-alanine + ATP = D-alanyl-D-alanine + ADP + phosphate + H(+). It participates in cell wall biogenesis; peptidoglycan biosynthesis. Functionally, cell wall formation. This Pseudomonas aeruginosa (strain ATCC 15692 / DSM 22644 / CIP 104116 / JCM 14847 / LMG 12228 / 1C / PRS 101 / PAO1) protein is D-alanine--D-alanine ligase A.